A 134-amino-acid polypeptide reads, in one-letter code: Arsenate reductase (134 aa).

Catalysis depends on nucleophile residues Cys-11, Cys-83, and Cys-90. 2 cysteine pairs are disulfide-bonded: Cys-11/Cys-83 and Cys-83/Cys-90.

It belongs to the low molecular weight phosphotyrosine protein phosphatase family. Thioredoxin-coupled ArsC subfamily.

It localises to the cytoplasm. The catalysed reaction is arsenate + [thioredoxin]-dithiol + H(+) = arsenite + [thioredoxin]-disulfide + H2O. In terms of biological role, catalyzes the reduction of arsenate [As(V)] to arsenite [As(III)]. This chain is Arsenate reductase, found in Bacillus cereus (strain ZK / E33L).